The sequence spans 524 residues: Alkaline phosphatase, tissue-nonspecific isozyme (524 aa).

The first 17 residues, 1–17 (MISPFLVLAIGTCLTNS), serve as a signal peptide directing secretion. Asp-60 contributes to the Mg(2+) binding site. Residues Asp-60 and Ser-110 each coordinate Zn(2+). Residue Ser-110 is the Phosphoserine intermediate of the active site. Ser-110 carries the phosphoserine modification. Residues Cys-139 and Cys-201 are joined by a disulfide bond. A glycan (N-linked (GlcNAc...) asparagine) is linked at Asn-140. A Mg(2+)-binding site is contributed by Thr-173. Residue Asn-230 is glycosylated (N-linked (GlcNAc...) asparagine). Ca(2+) is bound at residue Glu-235. A glycan (N-linked (GlcNAc...) asparagine) is linked at Asn-271. Ca(2+) contacts are provided by Phe-290 and Glu-291. N-linked (GlcNAc...) asparagine glycosylation is present at Asn-303. Asp-306 contributes to the Ca(2+) binding site. Residue Glu-332 participates in Mg(2+) binding. Asp-337, His-341, Asp-378, and His-379 together coordinate Zn(2+). N-linked (GlcNAc...) asparagine glycosylation occurs at Asn-430. Position 454 (His-454) interacts with Zn(2+). The cysteines at positions 489 and 497 are disulfide-linked. The GPI-anchor amidated glycine moiety is linked to residue Gly-501. Positions 502–524 (SGSAPSPGALLLPLAVLSLRTLF) are cleaved as a propeptide — removed in mature form.

Belongs to the alkaline phosphatase family. In terms of assembly, homodimer. Requires Mg(2+) as cofactor. Zn(2+) is required as a cofactor. Ca(2+) serves as cofactor. Post-translationally, N-glycosylated. As to expression, widely expressed. Expressed in DRG neurons and spinal cord neurons.

The protein resides in the cell membrane. It localises to the extracellular vesicle membrane. The protein localises to the mitochondrion membrane. Its subcellular location is the mitochondrion intermembrane space. The catalysed reaction is a phosphate monoester + H2O = an alcohol + phosphate. The enzyme catalyses diphosphate + H2O = 2 phosphate + H(+). It carries out the reaction pyridoxal 5'-phosphate + H2O = pyridoxal + phosphate. It catalyses the reaction phosphoethanolamine + H2O = ethanolamine + phosphate. The catalysed reaction is N-phosphocreatine + H2O = creatine + phosphate. The enzyme catalyses ATP + H2O = ADP + phosphate + H(+). It carries out the reaction ADP + H2O = AMP + phosphate + H(+). It catalyses the reaction AMP + H2O = adenosine + phosphate. Phosphatase activity is specifically inhibited by 5-((5-chloro-2-methoxyphenyl)sulfonamido)nicotinamide (SBI-425). In terms of biological role, alkaline phosphatase that metabolizes various phosphate compounds and plays a key role in skeletal mineralization and adaptive thermogenesis. Has broad substrate specificity and can hydrolyze a considerable variety of compounds: however, only a few substrates, such as diphosphate (inorganic pyrophosphate; PPi), pyridoxal 5'-phosphate (PLP) and N-phosphocreatine are natural substrates. Plays an essential role in skeletal and dental mineralization via its ability to hydrolyze extracellular diphosphate, a potent mineralization inhibitor, to phosphate: it thereby promotes hydroxyapatite crystal formation and increases inorganic phosphate concentration. Acts in a non-redundant manner with PHOSPHO1 in skeletal mineralization: while PHOSPHO1 mediates the initiation of hydroxyapatite crystallization in the matrix vesicles (MVs), ALPL/TNAP catalyzes the spread of hydroxyapatite crystallization in the extracellular matrix. Also promotes dephosphorylation of osteopontin (SSP1), an inhibitor of hydroxyapatite crystallization in its phosphorylated state; it is however unclear whether ALPL/TNAP mediates SSP1 dephosphorylation via a direct or indirect manner. Catalyzes dephosphorylation of PLP to pyridoxal (PL), the transportable form of vitamin B6, in order to provide a sufficient amount of PLP in the brain, an essential cofactor for enzymes catalyzing the synthesis of diverse neurotransmitters. Additionally, also able to mediate ATP degradation in a stepwise manner to adenosine, thereby regulating the availability of ligands for purinergic receptors. Also capable of dephosphorylating microbial products, such as lipopolysaccharides (LPS) as well as other phosphorylated small-molecules, such as poly-inosine:cytosine (poly I:C). Acts as a key regulator of adaptive thermogenesis as part of the futile creatine cycle: localizes to the mitochondria of thermogenic fat cells and acts by mediating hydrolysis of N-phosphocreatine to initiate a futile cycle of creatine dephosphorylation and phosphorylation. During the futile creatine cycle, creatine and N-phosphocreatine are in a futile cycle, which dissipates the high energy charge of N-phosphocreatine as heat without performing any mechanical or chemical work. This chain is Alkaline phosphatase, tissue-nonspecific isozyme, found in Mus musculus (Mouse).